Here is a 468-residue protein sequence, read N- to C-terminus: Alpha-2A adrenergic receptor (468 aa).

The Extracellular portion of the chain corresponds to 1–48; that stretch reads MFRQEQPLAEGSFAPMGSLQPDAGNASWNGTEAPGGGARATPYSLQVT. 2 N-linked (GlcNAc...) asparagine glycosylation sites follow: Asn-25 and Asn-29. A helical membrane pass occupies residues 49–74; the sequence is LTLVCLAGLLMLFTVFGNVLVIIAVF. The Cytoplasmic portion of the chain corresponds to 75–85; sequence TSRALKAPQNL. A helical membrane pass occupies residues 86-111; sequence FLVSLASADILVATLVIPFSLANEVM. Residues 112-121 lie on the Extracellular side of the membrane; it reads GYWYFGKAWC. A disulfide bridge connects residues Cys-121 and Cys-203. The helical transmembrane segment at 122 to 144 threads the bilayer; it reads EIYLALDVLFCTSSIVHLCAISL. The Cytoplasmic portion of the chain corresponds to 145-164; sequence DRYWSITQAIEYNLKRTPRR. A helical membrane pass occupies residues 165 to 188; the sequence is IKAIIVTVWVISAVISFPPLISFE. Topologically, residues 189–207 are extracellular; it reads KKRGRSGQPSAEPRCEIND. Residues 208 to 232 traverse the membrane as a helical segment; it reads QKWYVISSSIGSFFAPCLIMILVYV. Over 233 to 392 the chain is Cytoplasmic; sequence RIYQIAKRRT…RQNREKRFTF (160 aa). Disordered stretches follow at residues 242 to 279 and 291 to 381; these read TRVP…VGPV and NGAP…SRWR. Residues 315–332 are compositionally biased toward basic and acidic residues; sequence SSEHAERPPGSRRSERGP. The residue at position 348 (Ser-348) is a Phosphoserine. The span at 351 to 366 shows a compositional bias: low complexity; sequence RRGPGATGLGAPTAGP. Residue Arg-370 is modified to Omega-N-methylarginine. The chain crosses the membrane as a helical span at residues 393-417; the sequence is VLAVVIGVFVVCWFPFFFTYTLTAI. Residues 418 to 427 lie on the Extracellular side of the membrane; sequence GCPVPPTLFK. Residues 428–448 form a helical membrane-spanning segment; that stretch reads FFFWFGYCNSSLNPVIYTIFN. The Cytoplasmic portion of the chain corresponds to 449-468; it reads HDFRRAFKKILCRGDRKRIV. The S-palmitoyl cysteine moiety is linked to residue Cys-460.

Belongs to the G-protein coupled receptor 1 family. Adrenergic receptor subfamily. ADRA2A sub-subfamily. In terms of assembly, component of the ADA2A-containing complex (ATAC), composed of KAT14, KAT2A, TADA2L, TADA3L, ZZ3, MBIP, WDR5, YEATS2, CCDC101 and DR1. Retina, brain and olfactory lobe.

It is found in the cell membrane. Functionally, alpha-2 adrenergic receptors mediate the catecholamine-induced inhibition of adenylate cyclase through the action of G proteins. Component of the ATAC complex, a complex with histone acetyltransferase activity on histones H3 and H4. The chain is Alpha-2A adrenergic receptor from Bos taurus (Bovine).